The chain runs to 466 residues: RUS family member 1 (466 aa).

A2 is subject to N-acetylalanine. Residues 245–265 (LLMLPLVSDCLSLSLGCFILL) traverse the membrane as a helical segment.

Belongs to the RUS1 family.

It is found in the membrane. The sequence is that of RUS family member 1 (Rusf1) from Rattus norvegicus (Rat).